Here is a 556-residue protein sequence, read N- to C-terminus: GDP-Man:Man(3)GlcNAc(2)-PP-Dol alpha-1,2-mannosyltransferase (556 aa).

Residues M1–T7 are Lumenal-facing. The helical transmembrane segment at Y8–W28 threads the bilayer. Residues R29 to Y184 lie on the Cytoplasmic side of the membrane. The segment covering S64 to T79 has biased composition (basic and acidic residues). Residues S64–T86 are disordered. The helical intramembrane region spans F185–L205. Residues V206 to H454 are Cytoplasmic-facing. An intramembrane region (helical) is located at residues F455–G475. Topologically, residues G476 to Q556 are cytoplasmic.

It belongs to the glycosyltransferase group 1 family. Glycosyltransferase 4 subfamily.

It localises to the endoplasmic reticulum membrane. The catalysed reaction is an alpha-D-Man-(1-&gt;3)-[alpha-D-Man-(1-&gt;6)]-beta-D-Man-(1-&gt;4)-beta-D-GlcNAc-(1-&gt;4)-alpha-D-GlcNAc-diphospho-di-trans,poly-cis-dolichol + 2 GDP-alpha-D-mannose = an alpha-D-Man-(1-&gt;2)-alpha-D-Man-(1-&gt;2)-alpha-D-Man-(1-&gt;3)-[alpha-D-Man-(1-&gt;6)]-beta-D-Man-(1-&gt;4)-beta-D-GlcNAc-(1-&gt;4)-alpha-D-GlcNAc-diphospho-di-trans,poly-cis-dolichol + 2 GDP + 2 H(+). It participates in protein modification; protein glycosylation. Functionally, GDP-Man:Man(3)GlcNAc(2)-PP-Dol alpha-1,2-mannosyltransferase that operates in the biosynthetic pathway of dolichol-linked oligosaccharides, the glycan precursors employed in protein asparagine (N)-glycosylation. The assembly of dolichol-linked oligosaccharides begins on the cytosolic side of the endoplasmic reticulum membrane and finishes in its lumen. The sequential addition of sugars to dolichol pyrophosphate produces dolichol-linked oligosaccharides containing fourteen sugars, including two GlcNAcs, nine mannoses and three glucoses. Once assembled, the oligosaccharide is transferred from the lipid to nascent proteins by oligosaccharyltransferases. Catalyzes, on the cytoplasmic face of the endoplasmic reticulum, the addition of the fourth and fifth mannose residues to the dolichol-linked oligosaccharide chain, to produce Man(5)GlcNAc(2)-PP-dolichol core oligosaccharide. The sequence is that of GDP-Man:Man(3)GlcNAc(2)-PP-Dol alpha-1,2-mannosyltransferase (alg-11) from Neurospora crassa (strain ATCC 24698 / 74-OR23-1A / CBS 708.71 / DSM 1257 / FGSC 987).